A 509-amino-acid chain; its full sequence is Maturase K (509 aa).

This sequence belongs to the intron maturase 2 family. MatK subfamily.

The protein resides in the plastid. Its subcellular location is the chloroplast. Functionally, usually encoded in the trnK tRNA gene intron. Probably assists in splicing its own and other chloroplast group II introns. In Nymphaea odorata (White water lily), this protein is Maturase K.